A 388-amino-acid chain; its full sequence is MLNGENVDSRIMGKVATRASSKGVKSTLGTRGALENISNVARNNLQAGAKKELVKAKRGMTKSKATSSLQSVMGLNVEPMEKAKPQSPEPMDMSEINSALEAFSQNLLEGVEDIDKNDFDNPQLCSEFVNDIYQYMRKLEREFKVRTDYMTIQEITERMRSILIDWLVQVHLRFHLLQETLFLTIQILDRYLEVQPVSKNKLQLVGVTSMLIAAKYEEMYPPEIGDFVYITDNAYTKAQIRSMECNILRRLDFSLGKPLCIHFLRRNSKAGGVDGQKHTMAKYLMELTLPEYAFVPYDPSEIAAAALCLSSKILEPDMEWGTTLVHYSAYSEDHLMPIVQKMALVLKNAPTAKFQAVRKKYSSAKFMNVSTISALTSSTVMDLADQMC.

Belongs to the cyclin family. Cyclin AB subfamily. In terms of assembly, interacts with the CDK1 protein kinase to form a serine/threonine kinase holoenzyme complex also known as maturation promoting factor (MPF). The cyclin subunit imparts substrate specificity to the complex.

Essential for the control of the cell cycle at the G2/M (mitosis) transition. This chain is G2/mitotic-specific cyclin-B, found in Marthasterias glacialis (Spiny starfish).